Here is a 165-residue protein sequence, read N- to C-terminus: MSFASAPTVPTNTSHYADLPAASSALFQAKARRGLTFDQIAKAIGKDEVWLAAAFYGQARFTEDELITVGEVLGIGSSELVSQLGSHWWPNRGLGPMPPTDPVIYRLYESVLVYGHAIKAVIHEKFGDGIMSMIDCKINVERKEDPKGDRVLLTFDGKFLPYARW.

Active-site residues include R106, E109, and S132.

It belongs to the cyanase family.

The enzyme catalyses cyanate + hydrogencarbonate + 3 H(+) = NH4(+) + 2 CO2. Its function is as follows. Catalyzes the reaction of cyanate with bicarbonate to produce ammonia and carbon dioxide. In Laccaria bicolor (strain S238N-H82 / ATCC MYA-4686) (Bicoloured deceiver), this protein is Cyanate hydratase.